Here is a 169-residue protein sequence, read N- to C-terminus: Crossover junction endodeoxyribonuclease RuvC (169 aa).

Active-site residues include aspartate 11, glutamate 71, and histidine 143. Mg(2+) is bound by residues aspartate 11, glutamate 71, and histidine 143.

The protein belongs to the RuvC family. Homodimer which binds Holliday junction (HJ) DNA. The HJ becomes 2-fold symmetrical on binding to RuvC with unstacked arms; it has a different conformation from HJ DNA in complex with RuvA. In the full resolvosome a probable DNA-RuvA(4)-RuvB(12)-RuvC(2) complex forms which resolves the HJ. The cofactor is Mg(2+).

The protein localises to the cytoplasm. The catalysed reaction is Endonucleolytic cleavage at a junction such as a reciprocal single-stranded crossover between two homologous DNA duplexes (Holliday junction).. Its function is as follows. The RuvA-RuvB-RuvC complex processes Holliday junction (HJ) DNA during genetic recombination and DNA repair. Endonuclease that resolves HJ intermediates. Cleaves cruciform DNA by making single-stranded nicks across the HJ at symmetrical positions within the homologous arms, yielding a 5'-phosphate and a 3'-hydroxyl group; requires a central core of homology in the junction. The consensus cleavage sequence is 5'-(A/T)TT(C/G)-3'. Cleavage occurs on the 3'-side of the TT dinucleotide at the point of strand exchange. HJ branch migration catalyzed by RuvA-RuvB allows RuvC to scan DNA until it finds its consensus sequence, where it cleaves and resolves the cruciform DNA. In Mesorhizobium japonicum (strain LMG 29417 / CECT 9101 / MAFF 303099) (Mesorhizobium loti (strain MAFF 303099)), this protein is Crossover junction endodeoxyribonuclease RuvC.